The chain runs to 112 residues: Divalent-cation tolerance protein CutA (112 aa).

Positions 16, 83, and 84 each coordinate Cu cation.

This sequence belongs to the CutA family. As to quaternary structure, homotrimer. Cu cation is required as a cofactor.

The protein localises to the cytoplasm. Involved in resistance toward heavy metals. The chain is Divalent-cation tolerance protein CutA from Shigella flexneri.